We begin with the raw amino-acid sequence, 271 residues long: Indole-3-glycerol phosphate synthase (271 aa).

Belongs to the TrpC family.

The enzyme catalyses 1-(2-carboxyphenylamino)-1-deoxy-D-ribulose 5-phosphate + H(+) = (1S,2R)-1-C-(indol-3-yl)glycerol 3-phosphate + CO2 + H2O. It functions in the pathway amino-acid biosynthesis; L-tryptophan biosynthesis; L-tryptophan from chorismate: step 4/5. The polypeptide is Indole-3-glycerol phosphate synthase (Lachnoclostridium phytofermentans (strain ATCC 700394 / DSM 18823 / ISDg) (Clostridium phytofermentans)).